A 505-amino-acid chain; its full sequence is Glycerol kinase (505 aa).

An ADP-binding site is contributed by T14. ATP-binding residues include T14, T15, and S16. T14 contributes to the sn-glycerol 3-phosphate binding site. R18 is a binding site for ADP. Sn-glycerol 3-phosphate is bound by residues R84, E85, Y136, and D246. Residues R84, E85, Y136, D246, and Q247 each contribute to the glycerol site. Positions 268 and 311 each coordinate ADP. Residues T268, G311, Q315, and G412 each contribute to the ATP site. Residues G412 and N416 each contribute to the ADP site.

Belongs to the FGGY kinase family.

The enzyme catalyses glycerol + ATP = sn-glycerol 3-phosphate + ADP + H(+). Its pathway is polyol metabolism; glycerol degradation via glycerol kinase pathway; sn-glycerol 3-phosphate from glycerol: step 1/1. Its activity is regulated as follows. Inhibited by fructose 1,6-bisphosphate (FBP). Functionally, key enzyme in the regulation of glycerol uptake and metabolism. Catalyzes the phosphorylation of glycerol to yield sn-glycerol 3-phosphate. The protein is Glycerol kinase of Vibrio vulnificus (strain CMCP6).